The following is a 343-amino-acid chain: Zinc finger CCCH domain-containing protein 39 (343 aa).

Residues 114 to 147 (LSHLADAADEAAALRQENAELRVANNDLACRIAK) adopt a coiled-coil conformation. 2 consecutive C3H1-type zinc fingers follow at residues 268–296 (MFKT…HGVA) and 306–334 (RYKT…HSIT).

The chain is Zinc finger CCCH domain-containing protein 39 from Oryza sativa subsp. japonica (Rice).